The sequence spans 360 residues: RGG repeats nuclear RNA binding protein B (360 aa).

Disordered stretches follow at residues M1–M216 and M250–K360. Residue A2 is modified to N-acetylalanine. Residues P58–G77 show a composition bias toward gly residues. Basic and acidic residues-rich tracts occupy residues R99–R108 and D132–A157. Residues W162–S176 are compositionally biased toward polar residues. Composition is skewed to basic and acidic residues over residues L184–M216, S258–R283, and R311–R336. Residues K223–I288 form the FF domain. The residue at position 258 (S258) is a Phosphoserine.

The protein belongs to the SERBP1-HABP4 family.

It is found in the nucleus. It localises to the cytoplasm. The protein localises to the perinuclear region. Its function is as follows. Ribosome-binding protein that acts as a regulator of mRNA translation by promoting ribosome inactivation. Binds RNA. The protein is RGG repeats nuclear RNA binding protein B of Arabidopsis thaliana (Mouse-ear cress).